We begin with the raw amino-acid sequence, 373 residues long: 3-dehydroquinate synthase (373 aa).

NAD(+) is bound by residues 120–124, 144–145, lysine 157, lysine 166, and 184–187; these read GVVGD, TT, and FLKT. Zn(2+) is bound by residues glutamate 199, histidine 262, and histidine 278.

This sequence belongs to the sugar phosphate cyclases superfamily. Dehydroquinate synthase family. NAD(+) serves as cofactor. Co(2+) is required as a cofactor. Requires Zn(2+) as cofactor.

The protein resides in the cytoplasm. It catalyses the reaction 7-phospho-2-dehydro-3-deoxy-D-arabino-heptonate = 3-dehydroquinate + phosphate. It functions in the pathway metabolic intermediate biosynthesis; chorismate biosynthesis; chorismate from D-erythrose 4-phosphate and phosphoenolpyruvate: step 2/7. Functionally, catalyzes the conversion of 3-deoxy-D-arabino-heptulosonate 7-phosphate (DAHP) to dehydroquinate (DHQ). The sequence is that of 3-dehydroquinate synthase from Clostridium tetani (strain Massachusetts / E88).